Here is a 543-residue protein sequence, read N- to C-terminus: Secreted effector protein SptP (543 aa).

The chaperone-binding stretch occupies residues 35-139 (TDKAYVAPEK…FINLIKNKDN (105 aa)). The Bacterial Rho-GAP domain occupies 162-293 (DVGAESKQPL…TAELEKIKAG (132 aa)). Residues 315–543 (IPINQQTQVK…QAQLLMTTAS (229 aa)) form the Tyrosine-protein phosphatase domain. Catalysis depends on C481, which acts as the Phosphocysteine intermediate.

Forms a complex with SicP.

The protein resides in the secreted. Its subcellular location is the host cytoplasm. The catalysed reaction is O-phospho-L-tyrosyl-[protein] + H2O = L-tyrosyl-[protein] + phosphate. Its function is as follows. Effector proteins function to alter host cell physiology and promote bacterial survival in host tissues. This protein includes tyrosine phosphatase and GTPase activating protein (GAP) activities. After bacterial internalization, GAP mediates the reversal of the cytoskeletal changes induced by SopE. This function is independent of its tyrosine phosphatase activity, which remains unclear. The polypeptide is Secreted effector protein SptP (sptP) (Salmonella typhi).